Here is a 216-residue protein sequence, read N- to C-terminus: Maleylacetoacetate isomerase (216 aa).

Position 1 is an N-acetylmethionine (methionine 1). The GST N-terminal domain maps to 4–87 (GKPILYSYFR…YLEETRPIPR (84 aa)). Glutathione is bound by residues 14-19 (SSCSWR) and glutamine 45. An N6-succinyllysine modification is found at lysine 57. Glutathione is bound by residues valine 59, 71–72 (QS), glutamine 111, and 115–117 (NLS). Residues 92-212 (DPQKRAIVRM…HPRRQPDTPA (121 aa)) enclose the GST C-terminal domain. Position 136 is a phosphothreonine (threonine 136). At serine 137 the chain carries Phosphoserine. Residue lysine 177 is modified to N6-succinyllysine. Serine 181 is modified (phosphoserine).

This sequence belongs to the GST superfamily. Zeta family. Homodimer. Glutathione serves as cofactor. As to expression, expressed in liver, kidney, seminal glands and breast.

The protein localises to the cytoplasm. It carries out the reaction 4-maleylacetoacetate = 4-fumarylacetoacetate. It catalyses the reaction RX + glutathione = an S-substituted glutathione + a halide anion + H(+). It participates in amino-acid degradation; L-phenylalanine degradation; acetoacetate and fumarate from L-phenylalanine: step 5/6. Functionally, probable bifunctional enzyme showing minimal glutathione-conjugating activity with ethacrynic acid and 7-chloro-4-nitrobenz-2-oxa-1, 3-diazole and maleylacetoacetate isomerase activity. Also has low glutathione peroxidase activity with t-butyl and cumene hydroperoxides. Is able to catalyze the glutathione dependent oxygenation of dichloroacetic acid to glyoxylic acid. This chain is Maleylacetoacetate isomerase (Gstz1), found in Mus musculus (Mouse).